The sequence spans 385 residues: Acetate kinase (385 aa).

Residue Asn-9 participates in Mg(2+) binding. Residue Lys-16 coordinates ATP. Arg-87 provides a ligand contact to substrate. Asp-144 acts as the Proton donor/acceptor in catalysis. Residues 202–206 (HLGSG) and 277–279 (DMR) contribute to the ATP site. Glu-373 lines the Mg(2+) pocket.

This sequence belongs to the acetokinase family. In terms of assembly, homodimer. Requires Mg(2+) as cofactor. It depends on Mn(2+) as a cofactor.

The protein resides in the cytoplasm. It carries out the reaction acetate + ATP = acetyl phosphate + ADP. The protein operates within metabolic intermediate biosynthesis; acetyl-CoA biosynthesis; acetyl-CoA from acetate: step 1/2. Its function is as follows. Catalyzes the formation of acetyl phosphate from acetate and ATP. Can also catalyze the reverse reaction. The protein is Acetate kinase of Rickettsia prowazekii (strain Madrid E).